We begin with the raw amino-acid sequence, 211 residues long: Nucleoside triphosphate pyrophosphatase (211 aa).

The Proton acceptor role is filled by aspartate 75.

Belongs to the Maf family. It depends on a divalent metal cation as a cofactor.

Its subcellular location is the cytoplasm. It carries out the reaction a ribonucleoside 5'-triphosphate + H2O = a ribonucleoside 5'-phosphate + diphosphate + H(+). It catalyses the reaction a 2'-deoxyribonucleoside 5'-triphosphate + H2O = a 2'-deoxyribonucleoside 5'-phosphate + diphosphate + H(+). In terms of biological role, nucleoside triphosphate pyrophosphatase. May have a dual role in cell division arrest and in preventing the incorporation of modified nucleotides into cellular nucleic acids. The sequence is that of Nucleoside triphosphate pyrophosphatase from Prochlorococcus marinus (strain NATL2A).